The following is a 445-amino-acid chain: Trigger factor (445 aa).

Residues 171 to 256 (NDIVIIDFKG…VHVVNEVETP (86 aa)) form the PPIase FKBP-type domain.

The protein belongs to the FKBP-type PPIase family. Tig subfamily.

Its subcellular location is the cytoplasm. The catalysed reaction is [protein]-peptidylproline (omega=180) = [protein]-peptidylproline (omega=0). Its function is as follows. Involved in protein export. Acts as a chaperone by maintaining the newly synthesized protein in an open conformation. Functions as a peptidyl-prolyl cis-trans isomerase. The chain is Trigger factor from Malacoplasma penetrans (strain HF-2) (Mycoplasma penetrans).